The primary structure comprises 404 residues: 1-deoxy-D-xylulose 5-phosphate reductoisomerase (404 aa).

NADPH contacts are provided by threonine 5, glycine 6, serine 7, isoleucine 8, glycine 31, arginine 32, asparagine 33, and asparagine 121. Lysine 122 is a binding site for 1-deoxy-D-xylulose 5-phosphate. Residue glutamate 123 participates in NADPH binding. Position 147 (aspartate 147) interacts with Mn(2+). Serine 148, glutamate 149, serine 185, and histidine 208 together coordinate 1-deoxy-D-xylulose 5-phosphate. Mn(2+) is bound at residue glutamate 149. NADPH is bound at residue glycine 214. Serine 221, asparagine 226, lysine 227, and glutamate 230 together coordinate 1-deoxy-D-xylulose 5-phosphate. Glutamate 230 contributes to the Mn(2+) binding site.

This sequence belongs to the DXR family. Mg(2+) serves as cofactor. The cofactor is Mn(2+).

It catalyses the reaction 2-C-methyl-D-erythritol 4-phosphate + NADP(+) = 1-deoxy-D-xylulose 5-phosphate + NADPH + H(+). Its pathway is isoprenoid biosynthesis; isopentenyl diphosphate biosynthesis via DXP pathway; isopentenyl diphosphate from 1-deoxy-D-xylulose 5-phosphate: step 1/6. In terms of biological role, catalyzes the NADPH-dependent rearrangement and reduction of 1-deoxy-D-xylulose-5-phosphate (DXP) to 2-C-methyl-D-erythritol 4-phosphate (MEP). The sequence is that of 1-deoxy-D-xylulose 5-phosphate reductoisomerase from Prochlorococcus marinus subsp. pastoris (strain CCMP1986 / NIES-2087 / MED4).